We begin with the raw amino-acid sequence, 418 residues long: F-box/LRR-repeat protein 14 (418 aa).

An F-box domain is found at 2 to 48; it reads ETHISCLFPELLAMIFGYLDVRDKGRAAQVCTAWRDAAYHKSVWRGV. Positions 2–48 are required for down-regulation of SNAI1; sequence ETHISCLFPELLAMIFGYLDVRDKGRAAQVCTAWRDAAYHKSVWRGV. 5 LRR repeats span residues 144 to 163, 170 to 191, 203 to 225, 229 to 250, and 254 to 275; these read GLEVLELGGCSNITNTGLLL, RLKSLNLRSCRHLSDVGIGHLA, GLEQLTLQDCQKLTDLSLKHISR, GLRLLNLSFCGGISDAGLLHLS, and SLRSLNLRSCDNISDTGIMHLA.

Part of a SCF (SKP1-cullin-F-box) ubiquitin-protein ligase complex. Interacts with SKP1 and CUL1. Interacts with SNAI1; the interaction requires the phosphorylation of the two serine residues in the substrate destruction motif D-S-G-X(2,3,4)-S.

It is found in the cytoplasm. Functionally, substrate-recognition component of some SCF (SKP1-CUL1-F-box protein)-type E3 ubiquitin-protein ligase complexes. The SCF(FBXL14) complex acts by mediating ubiquitination and subsequent degradation of SNAI1. In Homo sapiens (Human), this protein is F-box/LRR-repeat protein 14 (FBXL14).